Consider the following 59-residue polypeptide: Large ribosomal subunit protein bL35 (59 aa).

Over residues 17–43 (GQIKRKHAYTSHLAPHKSTKQKRHLRK) the composition is skewed to basic residues. The segment at 17–47 (GQIKRKHAYTSHLAPHKSTKQKRHLRKQATV) is disordered.

It belongs to the bacterial ribosomal protein bL35 family.

In Mycoplasma genitalium (strain ATCC 33530 / DSM 19775 / NCTC 10195 / G37) (Mycoplasmoides genitalium), this protein is Large ribosomal subunit protein bL35.